Consider the following 342-residue polypeptide: UDP-3-O-acylglucosamine N-acyltransferase (342 aa).

His-241 serves as the catalytic Proton acceptor.

This sequence belongs to the transferase hexapeptide repeat family. LpxD subfamily. In terms of assembly, homotrimer.

The catalysed reaction is a UDP-3-O-[(3R)-3-hydroxyacyl]-alpha-D-glucosamine + a (3R)-hydroxyacyl-[ACP] = a UDP-2-N,3-O-bis[(3R)-3-hydroxyacyl]-alpha-D-glucosamine + holo-[ACP] + H(+). Its pathway is bacterial outer membrane biogenesis; LPS lipid A biosynthesis. Catalyzes the N-acylation of UDP-3-O-acylglucosamine using 3-hydroxyacyl-ACP as the acyl donor. Is involved in the biosynthesis of lipid A, a phosphorylated glycolipid that anchors the lipopolysaccharide to the outer membrane of the cell. This is UDP-3-O-acylglucosamine N-acyltransferase from Pasteurella multocida (strain Pm70).